Here is a 466-residue protein sequence, read N- to C-terminus: MGALDEGCLNLELDIGMKNGCIELAFEHQPETLAIQDAVKLLLQGLHEDVNREGIKKTPFRVAKALREGTRGYKQKVKDYVQSALFPEAGLDEGVGQAGGVGGLVVVRDLDHYSYCESCLLPFHVKCHIGYVPSGQRVLGLSKFSRVTDVFAKRLQDPQRLADDICSALQHWVKPAGVAVVLECSHIHFPSLDLDSLNLSSHRGFVKLLVSSGSGVFEDESSNLWGEFQSFLMFKGVKTQALCRNGSSVKEWCPSVKSSSKLSPEVDPEMVSAVVSILKSLGEDPLRKELIATPTRFLKWMLNFQRTNLEMKLNSFNPAKVNGEVKEKRLHCELNMPFWSMCEHHLLPFYGVVHIGYFCAEGSNPNPVGSSLMKAIVHFYGFKLQVQERMTRQIAETLSPLVGGDVIVVAEAGHTCMISRGIEKFGSSTATIAVLGRFSSDNSARAMFLDKIHTTNALKTESSSPF.

Positions 342, 345, and 416 each coordinate Zn(2+).

It belongs to the GTP cyclohydrolase I family. Homodimer.

The enzyme catalyses GTP + H2O = 7,8-dihydroneopterin 3'-triphosphate + formate + H(+). It functions in the pathway cofactor biosynthesis; 7,8-dihydroneopterin triphosphate biosynthesis; 7,8-dihydroneopterin triphosphate from GTP: step 1/1. In terms of biological role, GTP cyclohydrolase 1 is the first enzyme in the biosynthetic pathway leading to folic acid. The sequence is that of GTP cyclohydrolase 1 (GCH1) from Arabidopsis thaliana (Mouse-ear cress).